We begin with the raw amino-acid sequence, 327 residues long: Secondary metabolism regulator LAE1 (327 aa).

This sequence belongs to the methyltransferase superfamily. LaeA methyltransferase family.

It is found in the nucleus. The catalysed reaction is L-methionyl-[protein] + S-adenosyl-L-methionine = S-methyl-L-methionyl-[protein] + S-adenosyl-L-homocysteine. Secondary metabolism regulator that controls the expression of the tenuazonic acid biosynthesis cluster. Methyltransferase that performs automethylation. No other methyl-accepting substrate has been identified yet. The sequence is that of Secondary metabolism regulator LAE1 from Pyricularia oryzae (strain 70-15 / ATCC MYA-4617 / FGSC 8958) (Rice blast fungus).